The sequence spans 346 residues: tRNA N6-adenosine threonylcarbamoyltransferase (346 aa).

The Fe cation site is built by His-110 and His-114. Residues 132–136, Asp-165, Gly-178, and Asn-274 each bind substrate; that span reads LLSGG. Position 298 (Asp-298) interacts with Fe cation.

It belongs to the KAE1 / TsaD family. Fe(2+) is required as a cofactor.

The protein localises to the cytoplasm. The catalysed reaction is L-threonylcarbamoyladenylate + adenosine(37) in tRNA = N(6)-L-threonylcarbamoyladenosine(37) in tRNA + AMP + H(+). Required for the formation of a threonylcarbamoyl group on adenosine at position 37 (t(6)A37) in tRNAs that read codons beginning with adenine. Is involved in the transfer of the threonylcarbamoyl moiety of threonylcarbamoyl-AMP (TC-AMP) to the N6 group of A37, together with TsaE and TsaB. TsaD likely plays a direct catalytic role in this reaction. The polypeptide is tRNA N6-adenosine threonylcarbamoyltransferase (Borreliella burgdorferi (strain ATCC 35210 / DSM 4680 / CIP 102532 / B31) (Borrelia burgdorferi)).